The chain runs to 505 residues: ATP synthase subunit alpha (505 aa).

Position 169–176 (169–176 (GDRKTGKT)) interacts with ATP.

This sequence belongs to the ATPase alpha/beta chains family. In terms of assembly, F-type ATPases have 2 components, CF(1) - the catalytic core - and CF(0) - the membrane proton channel. CF(1) has five subunits: alpha(3), beta(3), gamma(1), delta(1), epsilon(1). CF(0) has three main subunits: a(1), b(2) and c(9-12). The alpha and beta chains form an alternating ring which encloses part of the gamma chain. CF(1) is attached to CF(0) by a central stalk formed by the gamma and epsilon chains, while a peripheral stalk is formed by the delta and b chains.

The protein localises to the cell membrane. It carries out the reaction ATP + H2O + 4 H(+)(in) = ADP + phosphate + 5 H(+)(out). In terms of biological role, produces ATP from ADP in the presence of a proton gradient across the membrane. The alpha chain is a regulatory subunit. This Pediococcus pentosaceus (strain ATCC 25745 / CCUG 21536 / LMG 10740 / 183-1w) protein is ATP synthase subunit alpha.